The chain runs to 365 residues: Chorismate synthase (365 aa).

2 residues coordinate NADP(+): R48 and R54. FMN-binding positions include 129 to 131 (RSS), 241 to 242 (NA), G285, 300 to 304 (KPTSS), and R326.

The protein belongs to the chorismate synthase family. As to quaternary structure, homotetramer. FMNH2 serves as cofactor.

The enzyme catalyses 5-O-(1-carboxyvinyl)-3-phosphoshikimate = chorismate + phosphate. It participates in metabolic intermediate biosynthesis; chorismate biosynthesis; chorismate from D-erythrose 4-phosphate and phosphoenolpyruvate: step 7/7. In terms of biological role, catalyzes the anti-1,4-elimination of the C-3 phosphate and the C-6 proR hydrogen from 5-enolpyruvylshikimate-3-phosphate (EPSP) to yield chorismate, which is the branch point compound that serves as the starting substrate for the three terminal pathways of aromatic amino acid biosynthesis. This reaction introduces a second double bond into the aromatic ring system. This Parvibaculum lavamentivorans (strain DS-1 / DSM 13023 / NCIMB 13966) protein is Chorismate synthase.